Reading from the N-terminus, the 236-residue chain is Virion protein US10 homolog (236 aa).

Residues 1–32 form a disordered region; it reads MDGAYGHVHNGSPMAVDGEESGAGTGTGAGAD. A compositionally biased stretch (gly residues) spans 21–31; that stretch reads SGAGTGTGAGA. A zinc finger lies at 138 to 150; the sequence is CAYWCCLGHAFAC.

It belongs to the herpesviridae US10 family. Phosphorylated.

It is found in the virion tegument. Its subcellular location is the host nucleus matrix. This Equine herpesvirus 1 (strain Ab4p) (EHV-1) protein is Virion protein US10 homolog.